The chain runs to 104 residues: Transcription initiation factor IIA subunit 2 (104 aa).

The protein belongs to the TFIIA subunit 2 family. In terms of assembly, TFIIA is a heterodimer of the large unprocessed subunit 1 and a small subunit gamma.

Its subcellular location is the nucleus. Its function is as follows. TFIIA is a component of the transcription machinery of RNA polymerase II and plays an important role in transcriptional activation. TFIIA in a complex with TBP mediates transcriptional activity. The chain is Transcription initiation factor IIA subunit 2 from Schistosoma mansoni (Blood fluke).